A 41-amino-acid polypeptide reads, in one-letter code: MKVLSSLKSAKTRHRDCKVIRRRGKIFVICKSNPRFKARQR.

This sequence belongs to the bacterial ribosomal protein bL36 family.

The protein is Large ribosomal subunit protein bL36 of Xylella fastidiosa (strain 9a5c).